The chain runs to 878 residues: Aconitase htyD (878 aa).

Residues glutamine 173 and 290–292 (DSH) contribute to the substrate site. Positions 472, 535, and 538 each coordinate [4Fe-4S] cluster. Arginine 558 and arginine 563 together coordinate substrate. Residues 626-671 (IAIANQRTKPAPTMPAYVEPYRSFQPPVPPSSDQPQSMKDHGKTSN) are disordered. Substrate is bound at residue 742-743 (SR).

This sequence belongs to the aconitase/IPM isomerase family.

Its pathway is antifungal biosynthesis. Aconitase; part of the gene cluster that mediates the de novo generation of L-homotyrosine from acetyl-CoA and 4-hydroxyphenyl-pyruvate. L-homotyrosine is a building block of echinocandin B, a fungal lipidated cyclic hexapeptide that acts as an antifungal agent. L-homotyrosine 4-hydroxyphenyl-pyruvate first undergoes an aldol-type condensation by htyA with the C-2 of acetyl-CoA followed by the release of CoA to form 2-(4-hydroxybenzyl)-malate. This is followed by isomerization of 2-(4-hydroxy-benzyl)-malate to 3-(4-hydroxybenzyl)-malate by htyD. Thereafter, 3-(4-hydroxybenzyl)-malate undergoes decarboxylation and oxidation to form 2-oxo-4-(4-hydroxybenzyl)butanoic acid, coupled to reduction of NAD(+) to NADH by htyC. The product then undergoes transamination catalyzed by htyB to form L-homotyrosine. This is Aconitase htyD from Aspergillus rugulosus (Emericella rugulosa).